The sequence spans 891 residues: Putative alpha,alpha-trehalose-phosphate synthase [UDP-forming] 100 kDa subunit (891 aa).

Thr88 is modified (phosphothreonine). The disordered stretch occupies residues Thr88–Arg126. Residues Gly106–Arg124 are compositionally biased toward polar residues. A phosphoserine mark is found at Ser108 and Ser109. Positions Ala132–Lys613 are glycosyltransferase.

This sequence in the N-terminal section; belongs to the glycosyltransferase 20 family.

The enzyme catalyses D-glucose 6-phosphate + UDP-alpha-D-glucose = alpha,alpha-trehalose 6-phosphate + UDP + H(+). The chain is Putative alpha,alpha-trehalose-phosphate synthase [UDP-forming] 100 kDa subunit from Schizosaccharomyces pombe (strain 972 / ATCC 24843) (Fission yeast).